A 289-amino-acid chain; its full sequence is Phospholipase A1 (289 aa).

An N-terminal signal peptide occupies residues Met-1–Ala-20. At Gln-21–Leu-52 the chain is on the periplasmic side. A beta stranded transmembrane segment spans residues Tyr-53–Thr-65. The Extracellular segment spans residues Ser-66–Lys-84. The chain crosses the membrane as a beta stranded span at residues Asp-85–Arg-99. Over Gly-100–Asn-105 the chain is Periplasmic. A beta stranded transmembrane segment spans residues Ser-106 to Trp-118. Residues Gln-119–Pro-128 are Extracellular-facing. Ser-126 is a Ca(2+) binding site. A beta stranded membrane pass occupies residues Phe-129–Phe-148. Topologically, residues Ala-149–Gly-150 are periplasmic. A beta stranded membrane pass occupies residues Trp-151–Ser-164. Catalysis depends on His-162, which acts as the Proton acceptor. Ser-164 (nucleophile) is an active-site residue. Topologically, residues Asn-165 to Arg-173 are extracellular. Ca(2+) is bound by residues Arg-167 and Ser-172. A beta stranded transmembrane segment spans residues Ser-174–Asn-186. Topologically, residues Gly-187–Asn-188 are periplasmic. Residues Trp-189 to Val-198 form a beta stranded membrane-spanning segment. Topologically, residues Ile-199 to Gln-216 are extracellular. Asp-204 provides a ligand contact to Ca(2+). Residues Leu-217–Leu-223 form a beta stranded membrane-spanning segment. At Gly-224–Glu-225 the chain is on the periplasmic side. A beta stranded membrane pass occupies residues Ala-226–Tyr-234. Residues Asn-235–Gly-241 are Extracellular-facing. A beta stranded transmembrane segment spans residues Gly-242–Pro-250. Residues Val-251–Val-255 lie on the Periplasmic side of the membrane. A beta stranded membrane pass occupies residues Arg-256–Tyr-265. Over Gly-266 to Phe-274 the chain is Extracellular. Residues Asn-275 to Asn-286 form a beta stranded membrane-spanning segment. Over Asp-287–Phe-289 the chain is Periplasmic.

Belongs to the phospholipase A1 family. In terms of assembly, homodimer; dimerization is reversible, and the dimeric form is the active one. Ca(2+) is required as a cofactor.

The protein resides in the cell outer membrane. It carries out the reaction a 1,2-diacyl-sn-glycero-3-phosphocholine + H2O = a 2-acyl-sn-glycero-3-phosphocholine + a fatty acid + H(+). The enzyme catalyses a 1,2-diacyl-sn-glycero-3-phosphocholine + H2O = a 1-acyl-sn-glycero-3-phosphocholine + a fatty acid + H(+). In terms of biological role, hydrolysis of phosphatidylcholine with phospholipase A2 (EC 3.1.1.4) and phospholipase A1 (EC 3.1.1.32) activities. This Salmonella typhi protein is Phospholipase A1 (pldA).